The primary structure comprises 292 residues: uncharacterized protein (292 aa).

The chain crosses the membrane as a helical span at residues 17–37 (SMDMFFFLFIFLLFIYPEMMM).

It to M.jannaschii MJ0137.

Its subcellular location is the membrane. This is an uncharacterized protein from Methanocaldococcus jannaschii (strain ATCC 43067 / DSM 2661 / JAL-1 / JCM 10045 / NBRC 100440) (Methanococcus jannaschii).